Here is a 740-residue protein sequence, read N- to C-terminus: Polyribonucleotide nucleotidyltransferase (740 aa).

Mg(2+) is bound by residues D496 and D502. Residues 563–622 (PAIIRTSIHPDKIRDIIGPGGKIIKKLVEETGADIDIEDDGRVFIAAVDREKGKRALEII) form the KH domain. The region spanning 632 to 706 (GKLYNGKVTR…QQGRLKLSKK (75 aa)) is the S1 motif domain. Residues 707–740 (EAMRDMGLAPAESTSEQPEKRERRPFSRPKATKE) are disordered. The span at 723–740 (QPEKRERRPFSRPKATKE) shows a compositional bias: basic and acidic residues.

It belongs to the polyribonucleotide nucleotidyltransferase family. Mg(2+) serves as cofactor.

It localises to the cytoplasm. It carries out the reaction RNA(n+1) + phosphate = RNA(n) + a ribonucleoside 5'-diphosphate. Functionally, involved in mRNA degradation. Catalyzes the phosphorolysis of single-stranded polyribonucleotides processively in the 3'- to 5'-direction. This chain is Polyribonucleotide nucleotidyltransferase, found in Desulforamulus reducens (strain ATCC BAA-1160 / DSM 100696 / MI-1) (Desulfotomaculum reducens).